Reading from the N-terminus, the 25-residue chain is Small ribosomal subunit protein eS32 (25 aa).

The tract at residues 1-25 (MRAKWRKKRVRRLKRKRRKVRARSK) is disordered.

It belongs to the eukaryotic ribosomal protein eS32 family. In terms of assembly, component of the small ribosomal subunit.

The chain is Small ribosomal subunit protein eS32 (RPL41) from Eremothecium gossypii (strain ATCC 10895 / CBS 109.51 / FGSC 9923 / NRRL Y-1056) (Yeast).